A 486-amino-acid polypeptide reads, in one-letter code: Histone acetyltransferase type B catalytic subunit DDB_G0274269 (486 aa).

The stretch at 27–69 (DIEELKNKDNKENKDKENKAHIKDEGEEEEQKEKKEEEEKEDD) forms a coiled coil. A compositionally biased stretch (basic and acidic residues) spans 33-50 (NKDNKENKDKENKAHIKD). A disordered region spans residues 33-78 (NKDNKENKDKENKAHIKDEGEEEEQKEKKEEEEKEDDGGPISFHPT). In terms of domain architecture, N-acetyltransferase spans 189 to 386 (VVFRYHEKLQ…YRISIKKRLY (198 aa)). Residues 260–262 (YLI) and 267–273 (QRMGHGK) each bind acetyl-CoA. Residue Glu-299 is the Proton donor/acceptor of the active site. Positions 392–481 (DSEQIEKIKQ…KNYHKTLSSL (90 aa)) form a coiled coil.

It belongs to the HAT1 family.

It carries out the reaction L-lysyl-[protein] + acetyl-CoA = N(6)-acetyl-L-lysyl-[protein] + CoA + H(+). This is Histone acetyltransferase type B catalytic subunit DDB_G0274269 from Dictyostelium discoideum (Social amoeba).